A 246-amino-acid chain; its full sequence is 1-(5-phosphoribosyl)-5-[(5-phosphoribosylamino)methylideneamino] imidazole-4-carboxamide isomerase (246 aa).

Asp8 acts as the Proton acceptor in catalysis. Residue Asp130 is the Proton donor of the active site.

Belongs to the HisA/HisF family.

The protein resides in the cytoplasm. It catalyses the reaction 1-(5-phospho-beta-D-ribosyl)-5-[(5-phospho-beta-D-ribosylamino)methylideneamino]imidazole-4-carboxamide = 5-[(5-phospho-1-deoxy-D-ribulos-1-ylimino)methylamino]-1-(5-phospho-beta-D-ribosyl)imidazole-4-carboxamide. It functions in the pathway amino-acid biosynthesis; L-histidine biosynthesis; L-histidine from 5-phospho-alpha-D-ribose 1-diphosphate: step 4/9. This is 1-(5-phosphoribosyl)-5-[(5-phosphoribosylamino)methylideneamino] imidazole-4-carboxamide isomerase from Shigella sonnei (strain Ss046).